The sequence spans 306 residues: Ornithine carbamoyltransferase (306 aa).

Residues 46–49 (STRT), glutamine 73, arginine 97, and 124–127 (HPTQ) each bind carbamoyl phosphate. L-ornithine is bound by residues asparagine 156, aspartate 220, and 224–225 (SM). Carbamoyl phosphate-binding positions include 260-261 (CL) and arginine 288.

It belongs to the aspartate/ornithine carbamoyltransferase superfamily. OTCase family.

The protein localises to the cytoplasm. The enzyme catalyses carbamoyl phosphate + L-ornithine = L-citrulline + phosphate + H(+). The protein operates within amino-acid biosynthesis; L-arginine biosynthesis; L-arginine from L-ornithine and carbamoyl phosphate: step 1/3. In terms of biological role, reversibly catalyzes the transfer of the carbamoyl group from carbamoyl phosphate (CP) to the N(epsilon) atom of ornithine (ORN) to produce L-citrulline. This is Ornithine carbamoyltransferase from Campylobacter jejuni subsp. jejuni serotype O:23/36 (strain 81-176).